A 101-amino-acid chain; its full sequence is Small ribosomal subunit protein uS14 (101 aa).

The disordered stretch occupies residues 32–67; sequence SDAKRSDEEREAARLGLQKLPRNANPTRQRNRCEIT. A compositionally biased stretch (basic and acidic residues) spans 33 to 44; it reads DAKRSDEEREAA.

It belongs to the universal ribosomal protein uS14 family. As to quaternary structure, part of the 30S ribosomal subunit. Contacts proteins S3 and S10.

Binds 16S rRNA, required for the assembly of 30S particles and may also be responsible for determining the conformation of the 16S rRNA at the A site. The chain is Small ribosomal subunit protein uS14 from Paracidovorax citrulli (strain AAC00-1) (Acidovorax citrulli).